Reading from the N-terminus, the 635-residue chain is Surface protein F (635 aa).

An N-terminal signal peptide occupies residues 1 to 37 (MAKYRGKPFQLYVKLSCSTMMATSIILTNILPYDAQA). Basic and acidic residues-rich tracts occupy residues 101–112 (NELDSKDNKSSH) and 193–202 (KSKDASKDTS). 2 disordered regions span residues 101–122 (NELD…SDID) and 192–228 (HKSK…SGHV). An LPXTG sorting signal motif is present at residues 597–601 (LPKAG). Residue Ala600 is modified to Pentaglycyl murein peptidoglycan amidated alanine. A propeptide spans 601–635 (GETIKEHWLPISVIVGAMGVLMIWLSRRNKLKNKA) (removed by sortase).

It is found in the secreted. It localises to the cell wall. The protein is Surface protein F of Staphylococcus aureus (strain NCTC 8325 / PS 47).